A 67-amino-acid polypeptide reads, in one-letter code: uncharacterized protein (67 aa).

This is an uncharacterized protein from Lymantria dispar multicapsid nuclear polyhedrosis virus (LdMNPV).